The primary structure comprises 281 residues: uncharacterized protein (281 aa).

This is an uncharacterized protein from Acanthamoeba polyphaga (Amoeba).